The following is a 292-amino-acid chain: Pyridoxal 5'-phosphate synthase subunit PdxS (292 aa).

Asp22 lines the D-ribose 5-phosphate pocket. The Schiff-base intermediate with D-ribose 5-phosphate role is filled by Lys79. A D-ribose 5-phosphate-binding site is contributed by Gly151. Arg163 lines the D-glyceraldehyde 3-phosphate pocket. Residues Gly212 and 233-234 (GS) contribute to the D-ribose 5-phosphate site.

This sequence belongs to the PdxS/SNZ family. In the presence of PdxT, forms a dodecamer of heterodimers.

It carries out the reaction aldehydo-D-ribose 5-phosphate + D-glyceraldehyde 3-phosphate + L-glutamine = pyridoxal 5'-phosphate + L-glutamate + phosphate + 3 H2O + H(+). It functions in the pathway cofactor biosynthesis; pyridoxal 5'-phosphate biosynthesis. Catalyzes the formation of pyridoxal 5'-phosphate from ribose 5-phosphate (RBP), glyceraldehyde 3-phosphate (G3P) and ammonia. The ammonia is provided by the PdxT subunit. Can also use ribulose 5-phosphate and dihydroxyacetone phosphate as substrates, resulting from enzyme-catalyzed isomerization of RBP and G3P, respectively. This is Pyridoxal 5'-phosphate synthase subunit PdxS from Caldanaerobacter subterraneus subsp. tengcongensis (strain DSM 15242 / JCM 11007 / NBRC 100824 / MB4) (Thermoanaerobacter tengcongensis).